The following is a 602-amino-acid chain: uncharacterized protein (602 aa).

The Helicase ATP-binding domain occupies 51–210 (QYLGTQPRDF…PFVSYQPDAD (160 aa)). Over residues 430 to 439 (PHRESAHDPL) the composition is skewed to basic and acidic residues. Disordered regions lie at residues 430–452 (PHRE…TERG) and 518–538 (RAQL…ASVH). Over residues 523–534 (KGATQPATSGAS) the composition is skewed to polar residues.

To M.leprae ML1624.

This is an uncharacterized protein from Mycobacterium tuberculosis (strain CDC 1551 / Oshkosh).